Reading from the N-terminus, the 104-residue chain is Large ribosomal subunit protein uL23 (104 aa).

This sequence belongs to the universal ribosomal protein uL23 family. Part of the 50S ribosomal subunit. Contacts protein L29, and trigger factor when it is bound to the ribosome.

Functionally, one of the early assembly proteins it binds 23S rRNA. One of the proteins that surrounds the polypeptide exit tunnel on the outside of the ribosome. Forms the main docking site for trigger factor binding to the ribosome. This is Large ribosomal subunit protein uL23 from Nostoc sp. (strain PCC 7120 / SAG 25.82 / UTEX 2576).